Here is a 60-residue protein sequence, read N- to C-terminus: Large ribosomal subunit protein uL30 (60 aa).

Belongs to the universal ribosomal protein uL30 family. In terms of assembly, part of the 50S ribosomal subunit.

The protein is Large ribosomal subunit protein uL30 of Limosilactobacillus fermentum (strain NBRC 3956 / LMG 18251) (Lactobacillus fermentum).